Here is a 448-residue protein sequence, read N- to C-terminus: Tryptophan dimethylallyltransferase 2 (448 aa).

L-tryptophan-binding positions include 80-81 (IL) and Glu89. Residues Arg100, Lys186, and Tyr188 each coordinate substrate. 2 residues coordinate L-tryptophan: Tyr190 and Arg249. 7 residues coordinate substrate: Arg262, Lys264, Tyr266, Gln348, Tyr350, Tyr414, and Tyr418.

The protein belongs to the tryptophan dimethylallyltransferase family. In terms of assembly, homodimer.

The catalysed reaction is L-tryptophan + dimethylallyl diphosphate = 4-(3-methylbut-2-enyl)-L-tryptophan + diphosphate. Its pathway is alkaloid biosynthesis; ergot alkaloid biosynthesis. In terms of biological role, catalyzes the first step of ergot alkaloid biosynthesis. Ergot alkaloids, which are produced by endophyte fungi, can enhance plant host fitness, but also cause livestock toxicosis to host plants. The sequence is that of Tryptophan dimethylallyltransferase 2 (dmaW2) from Claviceps purpurea (strain 20.1) (Ergot fungus).